The chain runs to 448 residues: Endoglucanase (448 aa).

Residues 1 to 34 (MFSKIKKINFFKKTFSFLIAVVMMLFTVLGTNTY) form the signal peptide. Residues histidine 70, 74–75 (WY), tyrosine 101, and histidine 137 each bind substrate. Glutamate 175 acts as the Proton donor in catalysis. Tyrosine 237 serves as a coordination point for substrate. The active-site Nucleophile is glutamate 263. Substrate contacts are provided by residues 269 to 270 (AS), tryptophan 297, and 302 to 304 (KSE).

The protein belongs to the glycosyl hydrolase 5 (cellulase A) family.

It catalyses the reaction Endohydrolysis of (1-&gt;4)-beta-D-glucosidic linkages in cellulose, lichenin and cereal beta-D-glucans.. The chain is Endoglucanase (eglA) from Clostridium saccharobutylicum.